The chain runs to 5206 residues: Multifunctional-autoprocessing repeats-in-toxin (5206 aa).

The N-terminal stretch at 1–19 (MGKPFWRSVEYFFTGNYSA) is a signal peptide. RtxA repeat units follow at residues 101 to 118 (GAAG…GDVS), 121 to 138 (GAAA…GNVT), 141 to 157 (GAGG…QGNL), 161 to 184 (GAGA…GDVT), 187 to 204 (GAGA…GNIT), 207 to 224 (GAGA…GDIT), 255 to 272 (GVGG…GDIH), 275 to 291 (GGGA…GSSF), 584 to 601 (GAGG…GNVY), 604 to 620 (GGGI…FGNT), 624 to 641 (GGGA…GDLT), 644 to 658 (GAGL…SKQG), 741 to 753 (AGGA…VGDG), 759 to 771 (MLGG…HISG), 782 to 798 (ALGG…GNTL), 801 to 816 (MGGG…DGTT), 820 to 835 (MVGG…NGDT), 841 to 855 (GVGN…GQTL), 858 to 875 (MGAA…TSIA), 877 to 891 (MIGA…GEGN), 896 to 910 (MGGL…GNGD), 915 to 932 (MVAE…MSVA), 934 to 950 (MLAK…GTTL), 972 to 984 (MIGQ…KVGN), 991 to 1006 (MVGK…DGTS), 1031 to 1043 (GKAN…GDGL), 1067 to 1079 (AAAK…HVGD), 1087 to 1102 (AGKG…GTTV), 1110 to 1122 (GNVM…GTTI), 1125 to 1142 (AKGK…LGVN), 1145 to 1159 (WGQA…DGDR), 1163 to 1179 (AKGE…GKEV), 1184 to 1199 (GKAN…DDYT), 1201 to 1217 (AWGK…GRNV), 1220 to 1236 (AKGE…GDSF), 1242 to 1256 (KGNI…MQVT), 1258 to 1275 (AKGK…LSVT), 1296 to 1313 (AWGK…LNVA), and 1315 to 1332 (MKGK…LNIN). Residues 1606–1626 (SQQANAVSEHATQNQASQNAL) show a composition bias toward polar residues. Disordered regions lie at residues 1606-1682 (SQQA…ESEA) and 1738-1895 (IAAA…EQEA). Over residues 1627–1646 (SDKERAEADRQRLEQEKQKQ) the composition is skewed to basic and acidic residues. Polar residues predominate over residues 1652–1671 (GSQSQLESTDQQALGNNGQA). Positions 1778-1805 (AEAKADAETRKADAVAKSNDAKQAESDA) are enriched in basic and acidic residues. The span at 1825-1834 (NKANQAQNDA) shows a compositional bias: polar residues. The segment covering 1835–1849 (KGTKQNEGDRPDREG) has biased composition (basic and acidic residues). Residues 1870 to 1880 (SHITTDSQTNA) are compositionally biased toward polar residues. Positions 2377–2461 (ELMSVTELLD…SLLNQVNSRL (85 aa)) are membrane localization region (MLD). The segment at 2537–2901 (EYGQVVADTI…HQVTDVLDAL (365 aa)) is rho inactivation domain (RID). The segment at 2998–3113 (VVLFLHGSGS…MPSMTKAITA (116 aa)) is ABH effector region. The Peptidase C80 domain occupies 4111-4295 (PTADGGESRF…AENNKVSLSW (185 aa)). Residues 4117–4119 (ESR), 4144–4145 (KH), and Arg-4175 each bind 1D-myo-inositol hexakisphosphate. Residue His-4181 is the For cysteine protease activity of the active site. Ser-4226 serves as a coordination point for 1D-myo-inositol hexakisphosphate. Cys-4230 functions as the Nucleophile; for cysteine protease activity in the catalytic mechanism. Residues 4259–4261 (SVR), 4272–4273 (RK), Lys-4285, and Lys-4290 contribute to the 1D-myo-inositol hexakisphosphate site. 2 disordered regions span residues 4333–4362 (GAIG…ANNK) and 4738–4779 (LKEK…ETPD). The segment covering 4750 to 4762 (SSVSVNGASVNSA) has biased composition (low complexity).

It depends on Mg(2+) as a cofactor.

It is found in the secreted. Its subcellular location is the host cytoplasm. It localises to the host cytosol. The protein localises to the host cell membrane. The catalysed reaction is L-lysyl-/S-(2E,6E,10E)-geranylgeranyl-L-cysteinyl-[protein] + hexadecanoyl-CoA = N(6)-hexadecanoyl-L-lysyl-/S-(2E,6E,10E)-geranylgeranyl-L-cysteinyl-[protein] + CoA + H(+). It carries out the reaction L-lysyl-/S-(2E,6E,10E)-geranylgeranyl-L-cysteinyl-[protein] + dodecanoyl-CoA = N(6)-dodecanoyl-L-lysyl-/S-(2E,6E,10E)-geranylgeranyl-L-cysteinyl-[protein] + CoA + H(+). It catalyses the reaction L-lysyl-/S-(2E,6E,10E)-geranylgeranyl-L-cysteinyl-[protein] + decanoyl-CoA = N(6)-decanoyl-L-lysyl-/S-(2E,6E,10E)-geranylgeranyl-L-cysteinyl-[protein] + CoA + H(+). Its function is as follows. Precursor of a multifunctional toxin that causes destruction of the actin cytoskeleton by covalent cross-linking of actin and inactivation of Rho GTPases when translocated into the host cytoplasm. Upon translocation into the host cell, undergoes autoprocessing in cis mediated by the peptidase C80 domain (also named CPD domain): the protease activity is activated upon binding inositol hexakisphosphate (InsP6) present at the host cell membrane and delivers the Cysteine protease domain-containing toxin F3 chain to the host cytosol. The Cysteine protease domain-containing toxin F3 chain will then further cleave and release effector toxin chains that cause disassembly of the actin cytoskeleton and enhance V.vulnificus colonization of the small intestine, possibly by facilitating evasion of phagocytic cells. Following autocatalytic cleavage in cis, this chain mediates processing in trans to release other individual toxin chains to the host cytosol. Released effector toxin chains cause disassembly of the actin cytoskeleton and enhance V.vulnificus colonization of the small intestine, possibly by facilitating evasion of phagocytic cells. Functionally, actin-directed toxin that catalyzes the covalent cross-linking of host cytoplasmic monomeric actin. Mediates the cross-link between 'Lys-50' of one monomer and 'Glu-270' of another actin monomer, resulting in formation of highly toxic actin oligomers that cause cell rounding. The toxin can be highly efficient at very low concentrations by acting on formin homology family proteins: toxic actin oligomers bind with high affinity to formins and adversely affect both nucleation and elongation abilities of formins, causing their potent inhibition in both profilin-dependent and independent manners. Acts as an acid--amino-acid ligase that transfers the gamma-phosphoryl group of ATP to the 'Glu-270' actin residue, resulting in the formation of an activated acyl phosphate intermediate. This intermediate is further hydrolyzed and the energy of hydrolysis is utilized for the formation of the amide bond between actin subunits. In terms of biological role, N-epsilon-fatty acyltransferase that mediates lysine-palmitoylation of host Rho GTPase proteins, with a strong preference for host Rac1. After delivery to the host cytosol, localizes to the host cell membrane where it palmitoylates host Rho GTPase proteins, resulting in loss of all active GTP-bound Rho and subsequent actin depolymerization. Prenylation of host Rac1 at the C-terminus is required for lysine-palmitoylation. Its function is as follows. Indirectly activates the small GTPase CDC42. In Vibrio vulnificus, this protein is Multifunctional-autoprocessing repeats-in-toxin.